The chain runs to 441 residues: Probable xylan O-acetyltransferase 10 (441 aa).

Over 1–19 (MMKPQHGGMAGHGGGRTRS) the chain is Cytoplasmic. The helical; Signal-anchor for type II membrane protein transmembrane segment at 20-40 (PFLTSYALTLAFITFVSVLYF) threads the bilayer. Over 41–441 (KDFSSTLHQP…ELLYSKLFFP (401 aa)) the chain is Lumenal. The interval 50-81 (PFLTRPPPHRRQIARPRAPSHHHGGGSSSGGG) is disordered. Positions 56-73 (PPHRRQIARPRAPSHHHG) are enriched in basic residues. Intrachain disulfides connect Cys-97–Cys-148, Cys-119–Cys-184, Cys-128–Cys-422, and Cys-341–Cys-418. An N-linked (GlcNAc...) asparagine glycan is attached at Asn-154. The GDS motif signature appears at 171-173 (GDS). Ser-173 functions as the Nucleophile in the catalytic mechanism. Asn-212, Asn-343, and Asn-381 each carry an N-linked (GlcNAc...) asparagine glycan. Catalysis depends on Asp-417, which acts as the Proton donor. The DXXH motif signature appears at 417 to 420 (DCTH). The Proton acceptor role is filled by His-420.

The protein belongs to the PC-esterase family. TBL subfamily. Expressed in roots, leaves and stems.

The protein resides in the golgi apparatus membrane. In terms of biological role, probable xylan acetyltransferase required for 2-O- and 3-O-monoacetylation of xylosyl residues in xylan. Possesses extremely low activity in vitro. In Oryza sativa subsp. japonica (Rice), this protein is Probable xylan O-acetyltransferase 10.